The following is a 294-amino-acid chain: Nucleotide-binding protein Dde_1774 (294 aa).

An ATP-binding site is contributed by 14-21; sequence GLSGAGKS. Residue 66–69 participates in GTP binding; it reads DLRQ.

It belongs to the RapZ-like family.

Its function is as follows. Displays ATPase and GTPase activities. The chain is Nucleotide-binding protein Dde_1774 from Oleidesulfovibrio alaskensis (strain ATCC BAA-1058 / DSM 17464 / G20) (Desulfovibrio alaskensis).